Here is a 283-residue protein sequence, read N- to C-terminus: uncharacterized protein (283 aa).

6 helical membrane passes run 28–48 (LSST…ILLI), 65–85 (LTSL…GFIL), 113–133 (LKRG…FMIV), 135–155 (ILFI…IVFI), 200–220 (LNYI…NFVV), and 246–266 (IVDV…AVFA).

To M.jannaschii MJ0233.

The protein resides in the cell membrane. This is an uncharacterized protein from Methanocaldococcus jannaschii (strain ATCC 43067 / DSM 2661 / JAL-1 / JCM 10045 / NBRC 100440) (Methanococcus jannaschii).